A 109-amino-acid chain; its full sequence is UPF0060 membrane protein RHA1_ro06609 (109 aa).

The next 4 helical transmembrane spans lie at 7–27, 33–53, 62–82, and 88–108; these read VALF…VWQG, GWIW…VATL, ILAA…MVAD, and RWDV…MYAP.

It belongs to the UPF0060 family.

The protein localises to the cell membrane. The sequence is that of UPF0060 membrane protein RHA1_ro06609 from Rhodococcus jostii (strain RHA1).